The sequence spans 403 residues: S-adenosylmethionine synthase (403 aa).

ATP is bound at residue H15. D17 is a Mg(2+) binding site. Position 43 (E43) interacts with K(+). L-methionine is bound by residues E56 and Q99. Residues 99 to 109 (QSPDINQGVDR) form a flexible loop region. ATP contacts are provided by residues 166 to 168 (DAK), 232 to 233 (KF), D241, 247 to 248 (RK), A264, and K268. D241 provides a ligand contact to L-methionine. K272 lines the L-methionine pocket.

Belongs to the AdoMet synthase family. As to quaternary structure, homotetramer; dimer of dimers. Requires Mg(2+) as cofactor. K(+) serves as cofactor.

Its subcellular location is the cytoplasm. The enzyme catalyses L-methionine + ATP + H2O = S-adenosyl-L-methionine + phosphate + diphosphate. Its pathway is amino-acid biosynthesis; S-adenosyl-L-methionine biosynthesis; S-adenosyl-L-methionine from L-methionine: step 1/1. Catalyzes the formation of S-adenosylmethionine (AdoMet) from methionine and ATP. The overall synthetic reaction is composed of two sequential steps, AdoMet formation and the subsequent tripolyphosphate hydrolysis which occurs prior to release of AdoMet from the enzyme. This chain is S-adenosylmethionine synthase, found in Xanthomonas axonopodis pv. citri (strain 306).